We begin with the raw amino-acid sequence, 225 residues long: UPF0758 protein BAV2405 (225 aa).

The MPN domain maps to 103–225; it reads AMKHPEEVRR…ALSMAERGLI (123 aa). H174, H176, and D187 together coordinate Zn(2+). Positions 174–187 match the JAMM motif motif; sequence HNHPSGNPQPSAAD.

The protein belongs to the UPF0758 family.

This Bordetella avium (strain 197N) protein is UPF0758 protein BAV2405.